We begin with the raw amino-acid sequence, 298 residues long: Bifunctional protein FolD (298 aa).

NADP(+)-binding positions include 165-167 (GRG), Ser-194, and Ile-235.

This sequence belongs to the tetrahydrofolate dehydrogenase/cyclohydrolase family. In terms of assembly, homodimer.

The enzyme catalyses (6R)-5,10-methylene-5,6,7,8-tetrahydrofolate + NADP(+) = (6R)-5,10-methenyltetrahydrofolate + NADPH. It carries out the reaction (6R)-5,10-methenyltetrahydrofolate + H2O = (6R)-10-formyltetrahydrofolate + H(+). It functions in the pathway one-carbon metabolism; tetrahydrofolate interconversion. Catalyzes the oxidation of 5,10-methylenetetrahydrofolate to 5,10-methenyltetrahydrofolate and then the hydrolysis of 5,10-methenyltetrahydrofolate to 10-formyltetrahydrofolate. This chain is Bifunctional protein FolD, found in Amoebophilus asiaticus (strain 5a2).